Consider the following 140-residue polypeptide: 3-hydroxyacyl-[acyl-carrier-protein] dehydratase FabZ (140 aa).

His47 is an active-site residue.

The protein belongs to the thioester dehydratase family. FabZ subfamily.

Its subcellular location is the cytoplasm. The enzyme catalyses a (3R)-hydroxyacyl-[ACP] = a (2E)-enoyl-[ACP] + H2O. Involved in unsaturated fatty acids biosynthesis. Catalyzes the dehydration of short chain beta-hydroxyacyl-ACPs and long chain saturated and unsaturated beta-hydroxyacyl-ACPs. The chain is 3-hydroxyacyl-[acyl-carrier-protein] dehydratase FabZ from Streptococcus mutans serotype c (strain ATCC 700610 / UA159).